Reading from the N-terminus, the 354-residue chain is Dihydroflavonol 4-reductase (354 aa).

Positions 44 and 163 each coordinate NADP(+).

The protein belongs to the NAD(P)-dependent epimerase/dehydratase family. Dihydroflavonol-4-reductase subfamily.

It catalyses the reaction a (2R,3S,4S)-leucoanthocyanidin + NADP(+) = a (2R,3R)-dihydroflavonol + NADPH + H(+). It carries out the reaction (2S)-flavan-4-ol + NADP(+) = (2S)-flavanone + NADPH + H(+). Its pathway is pigment biosynthesis; anthocyanin biosynthesis. Functionally, bifunctional enzyme involved in flavonoid metabolism. The polypeptide is Dihydroflavonol 4-reductase (ANT18) (Hordeum vulgare (Barley)).